A 212-amino-acid chain; its full sequence is Ribosomal RNA large subunit methyltransferase E (212 aa).

Positions 57, 59, 77, 93, and 122 each coordinate S-adenosyl-L-methionine. Lysine 162 functions as the Proton acceptor in the catalytic mechanism.

This sequence belongs to the class I-like SAM-binding methyltransferase superfamily. RNA methyltransferase RlmE family.

The protein resides in the cytoplasm. It carries out the reaction uridine(2552) in 23S rRNA + S-adenosyl-L-methionine = 2'-O-methyluridine(2552) in 23S rRNA + S-adenosyl-L-homocysteine + H(+). Its function is as follows. Specifically methylates the uridine in position 2552 of 23S rRNA at the 2'-O position of the ribose in the fully assembled 50S ribosomal subunit. The polypeptide is Ribosomal RNA large subunit methyltransferase E (Coxiella burnetii (strain RSA 493 / Nine Mile phase I)).